Reading from the N-terminus, the 157-residue chain is AM-toxin biosynthesis protein 15 (157 aa).

Residues 17–43 are disordered; the sequence is RARHWDSKQGSSNSDVASGGSEVAGNS.

Its pathway is mycotoxin biosynthesis. Its function is as follows. Part of the gene clusters that mediate the biosynthesis of AM-toxins, host-selective toxins (HSTs) causing Alternaria blotch on apple, a worldwide distributed disease. AM-toxins are cyclic depsipeptides containing the 3 residues 2-hydroxy-isovaleric acid (2-HIV), dehydroalanine, L-alanine which are common for all 3 AM-toxins I to III. The fourth precursor is L-alpha-amino-methoxyphenyl-valeric acid (L-Amv) for AM-toxin I, L-alpha-amino-phenyl-valeric acid (L-Apv) for AM-toxin II, and L-alpha-amino-hydroxyphenyl-valeric acid (L-Ahv) for AM-toxin III. AM-toxins have two target sites for affecting susceptible apple cells; they cause invagination of the plasma membrane and electrolyte loss and chloroplast disorganization. The non-ribosomal peptide synthetase AMT1 contains 4 catalytic modules and is responsible for activation of each residue in AM-toxin. The aldo-keto reductase AMT2 catalyzes the conversion of 2-keto-isovaleric acid (2-KIV) to 2-hydroxy-isovaleric acid (2-HIV), one of the precursor residues incorporated by AMT1 during AM-toxin biosynthesis, by reduction of its ketone to an alcohol. The cytochrome P450 monooxygenase AMT3 and the thioesterase AMT4 are also important for AM-toxin production, but their exact function within the AM-toxin biosynthesis are not known yet. Up to 21 proteins (including AMT1 to AMT4) are predicted to be involved in AM-toxin biosynthesis since their expression ishighly up-regulated in AM-toxin-producing cultures. This is AM-toxin biosynthesis protein 15 from Alternaria alternata (Alternaria rot fungus).